The following is an 85-amino-acid chain: Toxin To9 (85 aa).

A signal peptide spans 1-19; the sequence is MNYSTLIAVASLLTAGTES. The 61-residue stretch at 21-81 folds into the LCN-type CS-alpha/beta domain; that stretch reads KDGYPVKEGD…AAIKGYGRCR (61 aa). Cystine bridges form between Cys31/Cys80, Cys35/Cys56, Cys42/Cys63, and Cys46/Cys65. Pro82 carries the proline amide modification.

This sequence belongs to the long (4 C-C) scorpion toxin superfamily. Sodium channel inhibitor family. Alpha subfamily. As to expression, expressed by the venom gland.

It is found in the secreted. Alpha toxins bind voltage-independently at site-3 of sodium channels (Nav) and inhibit the inactivation of the activated channels, thereby blocking neuronal transmission. This is Toxin To9 from Tityus obscurus (Amazonian scorpion).